A 191-amino-acid polypeptide reads, in one-letter code: Potassium-transporting ATPase KdpC subunit (191 aa).

Residues 8–28 (LFLFLLLLLVTGLAYPLLTTV) traverse the membrane as a helical segment.

The protein belongs to the KdpC family. As to quaternary structure, the system is composed of three essential subunits: KdpA, KdpB and KdpC.

The protein resides in the cell inner membrane. Functionally, part of the high-affinity ATP-driven potassium transport (or Kdp) system, which catalyzes the hydrolysis of ATP coupled with the electrogenic transport of potassium into the cytoplasm. This subunit acts as a catalytic chaperone that increases the ATP-binding affinity of the ATP-hydrolyzing subunit KdpB by the formation of a transient KdpB/KdpC/ATP ternary complex. The sequence is that of Potassium-transporting ATPase KdpC subunit from Pectobacterium atrosepticum (strain SCRI 1043 / ATCC BAA-672) (Erwinia carotovora subsp. atroseptica).